A 172-amino-acid polypeptide reads, in one-letter code: Small ribosomal subunit protein uS5 (172 aa).

The region spanning 7–70 is the S5 DRBM domain; sequence VVEHLVNVNR…QNAKKYMIEV (64 aa).

Belongs to the universal ribosomal protein uS5 family. As to quaternary structure, part of the 30S ribosomal subunit. Contacts proteins S4 and S8.

Its function is as follows. With S4 and S12 plays an important role in translational accuracy. Located at the back of the 30S subunit body where it stabilizes the conformation of the head with respect to the body. This Orientia tsutsugamushi (strain Boryong) (Rickettsia tsutsugamushi) protein is Small ribosomal subunit protein uS5.